The sequence spans 183 residues: Putative manganese efflux pump MntP (183 aa).

The next 6 helical transmembrane spans lie at 8–28 (MIAL…VALG), 39–59 (IFYI…VGMA), 68–88 (FGSI…GQMI), 108–128 (LFFA…LGIF), 133–153 (MATI…GLLV), and 162–182 (GSYS…KLLF).

Belongs to the MntP (TC 9.B.29) family.

The protein resides in the cell membrane. In terms of biological role, probably functions as a manganese efflux pump. This Geobacillus thermodenitrificans (strain NG80-2) protein is Putative manganese efflux pump MntP.